Consider the following 315-residue polypeptide: NAD(P)H-dependent anabolic L-arginine dehydrogenase DauB (315 aa).

Belongs to the ornithine cyclodeaminase/mu-crystallin family.

It carries out the reaction L-arginine + NAD(+) + H2O = 5-guanidino-2-oxopentanoate + NH4(+) + NADH + H(+). The catalysed reaction is L-arginine + NADP(+) + H2O = 5-guanidino-2-oxopentanoate + NH4(+) + NADPH + H(+). Its function is as follows. Involved in the anabolism of D-lysine and D-arginine. Under aerobic conditions, the arginine succinyltransferase (AST) and arginine transaminase (ATA) pathways are 2 major routes for L-arginine utilization as the sole source of carbon and nitrogen. The D-to-L racemization of arginine by DauA and DauB is necessary, before to be channeled into the AST and/or ATA pathways. DauB catalyzes the synthesis of L-arginine from 2-ketoarginine (2-KA) and ammonium. This Pseudomonas aeruginosa (strain ATCC 15692 / DSM 22644 / CIP 104116 / JCM 14847 / LMG 12228 / 1C / PRS 101 / PAO1) protein is NAD(P)H-dependent anabolic L-arginine dehydrogenase DauB.